Here is a 258-residue protein sequence, read N- to C-terminus: 4,5-dihydroxyphthalate decarboxylase (258 aa).

To P.testosteroni DHP decarboxylase.

The catalysed reaction is 4,5-dihydroxyphthalate + H(+) = 3,4-dihydroxybenzoate + CO2. The protein operates within xenobiotic degradation; phthalate degradation; 3,4-dihydroxybenzoate from phthalate: step 3/3. This Pseudomonas putida (Arthrobacter siderocapsulatus) protein is 4,5-dihydroxyphthalate decarboxylase (pht5).